A 117-amino-acid chain; its full sequence is MTESFTRRERLRLRRDFLTIFKEGESLQNEYFVVLFKKNGLDYSRLGIVVKRKFGKATRRNKLKRWVREIFRKSKGVIPKGFDIVVIPRKKLSEEFEQVDFWAVHEKLLNLLKRIEG.

Belongs to the RnpA family. As to quaternary structure, consists of a catalytic RNA component (M1 or rnpB) and a protein subunit.

The catalysed reaction is Endonucleolytic cleavage of RNA, removing 5'-extranucleotides from tRNA precursor.. In terms of biological role, RNaseP catalyzes the removal of the 5'-leader sequence from pre-tRNA to produce the mature 5'-terminus. It can also cleave other RNA substrates such as 4.5S RNA. The protein component plays an auxiliary but essential role in vivo by binding to the 5'-leader sequence and broadening the substrate specificity of the ribozyme. The polypeptide is Ribonuclease P protein component (Thermotoga petrophila (strain ATCC BAA-488 / DSM 13995 / JCM 10881 / RKU-1)).